The chain runs to 236 residues: Phosphoribosylaminoimidazole-succinocarboxamide synthase (236 aa).

Belongs to the SAICAR synthetase family.

It carries out the reaction 5-amino-1-(5-phospho-D-ribosyl)imidazole-4-carboxylate + L-aspartate + ATP = (2S)-2-[5-amino-1-(5-phospho-beta-D-ribosyl)imidazole-4-carboxamido]succinate + ADP + phosphate + 2 H(+). The protein operates within purine metabolism; IMP biosynthesis via de novo pathway; 5-amino-1-(5-phospho-D-ribosyl)imidazole-4-carboxamide from 5-amino-1-(5-phospho-D-ribosyl)imidazole-4-carboxylate: step 1/2. This Lactococcus lactis subsp. cremoris (Streptococcus cremoris) protein is Phosphoribosylaminoimidazole-succinocarboxamide synthase (purC).